Reading from the N-terminus, the 445-residue chain is Phosphoglucosamine mutase (445 aa).

The active-site Phosphoserine intermediate is the serine 102. Mg(2+)-binding residues include serine 102, aspartate 241, aspartate 243, and aspartate 245. Serine 102 carries the post-translational modification Phosphoserine.

This sequence belongs to the phosphohexose mutase family. Requires Mg(2+) as cofactor. Post-translationally, activated by phosphorylation.

The catalysed reaction is alpha-D-glucosamine 1-phosphate = D-glucosamine 6-phosphate. In terms of biological role, catalyzes the conversion of glucosamine-6-phosphate to glucosamine-1-phosphate. The protein is Phosphoglucosamine mutase of Pectobacterium atrosepticum (strain SCRI 1043 / ATCC BAA-672) (Erwinia carotovora subsp. atroseptica).